The following is a 145-amino-acid chain: Alpha-amylase/trypsin inhibitor CM2 (145 aa).

A signal peptide spans 1 to 25; the sequence is MASKSSITHLLLAAVLVSVFAAAAA.

It belongs to the protease inhibitor I6 (cereal trypsin/alpha-amylase inhibitor) family. As to expression, developing endosperm.

It is found in the secreted. Functionally, alpha-amylase/trypsin inhibitor. It could be involved in insect defense mechanisms. This chain is Alpha-amylase/trypsin inhibitor CM2, found in Triticum aestivum (Wheat).